Here is a 344-residue protein sequence, read N- to C-terminus: MTSNFSQPALQLCYENTNGSCIKTPYSPGPRVILYMVYGFGAVLAVCGNLLVVISVLHFKQLHSPANFLIASLASADFLVGISVMPFSMVRSIESCWYFGDAFCSLHSCCDVAFCYSSALHLCFISVDRYIAVTDPLVYPTKFTVSVSGICISISWILPLVYSSAVFYTGISAKGIESLVSALNCVGGCQVVVNQDWVLISFLLFFIPTVVMIILYSKIFLVAKQQAVKIETSVSGNRGESSSESHKARVAKRERKAAKTLGVTVVAFMVSWLPYTIDALVDAFMGFITPAYVYEICCWSAYYNSAMNPLIYAFFYPWFRKAIKLILSGKILKGHSSTTNLFSE.

Residues 1-31 (MTSNFSQPALQLCYENTNGSCIKTPYSPGPR) lie on the Extracellular side of the membrane. N4 and N18 each carry an N-linked (GlcNAc...) asparagine glycan. 2 disulfide bridges follow: C21-C185 and C104-C189. A helical transmembrane segment spans residues 32 to 52 (VILYMVYGFGAVLAVCGNLLV). Topologically, residues 53 to 67 (VISVLHFKQLHSPAN) are cytoplasmic. A helical transmembrane segment spans residues 68–88 (FLIASLASADFLVGISVMPFS). Residues 89 to 111 (MVRSIESCWYFGDAFCSLHSCCD) are Extracellular-facing. The chain crosses the membrane as a helical span at residues 112–132 (VAFCYSSALHLCFISVDRYIA). At 133–146 (VTDPLVYPTKFTVS) the chain is on the cytoplasmic side. The chain crosses the membrane as a helical span at residues 147–167 (VSGICISISWILPLVYSSAVF). Topologically, residues 168–195 (YTGISAKGIESLVSALNCVGGCQVVVNQ) are extracellular. A helical membrane pass occupies residues 196–216 (DWVLISFLLFFIPTVVMIILY). Topologically, residues 217 to 260 (SKIFLVAKQQAVKIETSVSGNRGESSSESHKARVAKRERKAAKT) are cytoplasmic. A helical membrane pass occupies residues 261–281 (LGVTVVAFMVSWLPYTIDALV). D282 is a topological domain (extracellular). Residues 283 to 303 (AFMGFITPAYVYEICCWSAYY) traverse the membrane as a helical segment. Residues 304–344 (NSAMNPLIYAFFYPWFRKAIKLILSGKILKGHSSTTNLFSE) lie on the Cytoplasmic side of the membrane.

The protein belongs to the G-protein coupled receptor 1 family. In terms of tissue distribution, specifically expressed in neurons of the olfactory epithelium.

It localises to the cell membrane. In terms of biological role, olfactory receptor specific for trace amines, such ascyclohexylamine (1-MPD). Trace amine compounds are enriched in animal body fluids and act on trace amine-associated receptors (TAARs) to elicit both intraspecific and interspecific innate behaviors. Ligand-binding causes a conformation change that triggers signaling via G(s)-class of G alpha proteins (GNAL or GNAS). The polypeptide is Trace amine-associated receptor 8c (Mus musculus (Mouse)).